The primary structure comprises 178 residues: Deoxycytidylate deaminase (178 aa).

Positions Glu-14–Phe-145 constitute a CMP/dCMP-type deaminase domain. Residue His-84 participates in Zn(2+) binding. Glu-86 functions as the Proton donor in the catalytic mechanism. Positions 110 and 113 each coordinate Zn(2+). A Phosphoserine modification is found at Ser-174.

It belongs to the cytidine and deoxycytidylate deaminase family. As to quaternary structure, homohexamer. Requires Zn(2+) as cofactor.

It carries out the reaction dCMP + H2O + H(+) = dUMP + NH4(+). It catalyses the reaction 5-hydroxymethyl-dCMP + H2O + H(+) = 5-hydroxymethyl-dUMP + NH4(+). Its activity is regulated as follows. Allosteric enzyme whose activity is greatly influenced by the end products of its metabolic pathway, dCTP and dTTP. Functionally, catalyzes the deamination of dCMP to dUMP, providing the nucleoside monophosphate substrate for the thymidylate synthase/TYMS. Also, part of a nucleotide salvage pathway that eliminates epigenetically modified 5-hydroxymethyl-dCMP (hmdCMP) in a two-step process entailing deamination to cytotoxic 5-hydroxymethyl-dUMP (hmdUMP), followed by its hydrolysis into 5-hydroxymethyluracil (hmU) and 2-deoxy-D-ribose 5-phosphate (deoxyribosephosphate). Catalyzes the first step in that pathway, the deamination of 5-hydroxymethyl-dCMP (hmdCMP). The chain is Deoxycytidylate deaminase from Mus musculus (Mouse).